Consider the following 346-residue polypeptide: S-adenosylmethionine:tRNA ribosyltransferase-isomerase (346 aa).

Belongs to the QueA family. As to quaternary structure, monomer.

Its subcellular location is the cytoplasm. The enzyme catalyses 7-aminomethyl-7-carbaguanosine(34) in tRNA + S-adenosyl-L-methionine = epoxyqueuosine(34) in tRNA + adenine + L-methionine + 2 H(+). It functions in the pathway tRNA modification; tRNA-queuosine biosynthesis. Transfers and isomerizes the ribose moiety from AdoMet to the 7-aminomethyl group of 7-deazaguanine (preQ1-tRNA) to give epoxyqueuosine (oQ-tRNA). The protein is S-adenosylmethionine:tRNA ribosyltransferase-isomerase of Shewanella frigidimarina (strain NCIMB 400).